A 236-amino-acid chain; its full sequence is Leucyl/phenylalanyl-tRNA--protein transferase (236 aa).

It belongs to the L/F-transferase family.

The protein localises to the cytoplasm. The catalysed reaction is N-terminal L-lysyl-[protein] + L-leucyl-tRNA(Leu) = N-terminal L-leucyl-L-lysyl-[protein] + tRNA(Leu) + H(+). The enzyme catalyses N-terminal L-arginyl-[protein] + L-leucyl-tRNA(Leu) = N-terminal L-leucyl-L-arginyl-[protein] + tRNA(Leu) + H(+). It carries out the reaction L-phenylalanyl-tRNA(Phe) + an N-terminal L-alpha-aminoacyl-[protein] = an N-terminal L-phenylalanyl-L-alpha-aminoacyl-[protein] + tRNA(Phe). Its function is as follows. Functions in the N-end rule pathway of protein degradation where it conjugates Leu, Phe and, less efficiently, Met from aminoacyl-tRNAs to the N-termini of proteins containing an N-terminal arginine or lysine. The sequence is that of Leucyl/phenylalanyl-tRNA--protein transferase from Shewanella sp. (strain MR-4).